Reading from the N-terminus, the 691-residue chain is Competence protein ComA (691 aa).

Transmembrane regions (helical) follow at residues 183 to 203 (HLVSISGLHVTMVAVLFAWLA), 220 to 240 (WVLAAGCAGALFYALLAGFSV), 280 to 300 (LAVLGVGTWLSFGLVAALIWA), 322 to 342 (VLSLVLLGYLFASLPLVSPLV), 347 to 367 (IPWFSWVLTPLALLGSVVPFA), and 396 to 416 (VAAAPLPLLVLAVCAALLLLL).

This sequence to B.subtilis ComEC, H.influenzae REC2, and E.coli YcaI.

The protein resides in the cell inner membrane. In terms of biological role, essential for natural transformation. Could be a transporter involved in DNA uptake. The sequence is that of Competence protein ComA (comA) from Neisseria gonorrhoeae.